We begin with the raw amino-acid sequence, 166 residues long: MFPMVTEFMNYGQQTVRAARYIGQGFMITLSHANRLPVTIQYPYEKLITSERFRGRIHFEFDKCIACEVCVRVCPIDLPVVDWKLETDIRKKRLLNYSIDFGICIFCGNCVEYCPTNCLSMTEEYELSTYDRHELNYNQIALGRLPMSVIDDYTIRTIFNLPEIKT.

4Fe-4S ferredoxin-type domains lie at 55–84 (GRIH…VDWK) and 95–124 (LNYS…MTEE). Positions 64, 67, 70, 74, 104, 107, 110, and 114 each coordinate [4Fe-4S] cluster.

This sequence belongs to the complex I 23 kDa subunit family. In terms of assembly, NDH is composed of at least 16 different subunits, 5 of which are encoded in the nucleus. The cofactor is [4Fe-4S] cluster.

It localises to the plastid. The protein localises to the chloroplast thylakoid membrane. It catalyses the reaction a plastoquinone + NADH + (n+1) H(+)(in) = a plastoquinol + NAD(+) + n H(+)(out). The enzyme catalyses a plastoquinone + NADPH + (n+1) H(+)(in) = a plastoquinol + NADP(+) + n H(+)(out). NDH shuttles electrons from NAD(P)H:plastoquinone, via FMN and iron-sulfur (Fe-S) centers, to quinones in the photosynthetic chain and possibly in a chloroplast respiratory chain. The immediate electron acceptor for the enzyme in this species is believed to be plastoquinone. Couples the redox reaction to proton translocation, and thus conserves the redox energy in a proton gradient. The protein is NAD(P)H-quinone oxidoreductase subunit I, chloroplastic of Lactuca sativa (Garden lettuce).